Here is a 145-residue protein sequence, read N- to C-terminus: Mannitol-specific phosphotransferase enzyme IIA component (145 aa).

A PTS EIIA type-2 domain is found at E2 to A145. H62 functions as the Tele-phosphohistidine intermediate in the catalytic mechanism. H62 is subject to Phosphohistidine; by HPr.

The protein localises to the cytoplasm. In terms of biological role, the phosphoenolpyruvate-dependent sugar phosphotransferase system (sugar PTS), a major carbohydrate active transport system, catalyzes the phosphorylation of incoming sugar substrates concomitantly with their translocation across the cell membrane. The enzyme II CmtAB PTS system is involved in D-mannitol transport. This chain is Mannitol-specific phosphotransferase enzyme IIA component, found in Enterococcus faecalis (strain ATCC 700802 / V583).